A 214-amino-acid polypeptide reads, in one-letter code: Pyridoxine/pyridoxamine 5'-phosphate oxidase (214 aa).

Residues 8–11 (RTNY) and Lys66 each bind substrate. FMN is bound by residues 61–66 (RIVLIK), 76–77 (FT), Arg82, Lys83, and Gln105. Tyr123, Arg127, and Ser131 together coordinate substrate. Residues 140 to 141 (QS) and Trp184 contribute to the FMN site. Substrate is bound at residue 190–192 (RLH). Arg194 serves as a coordination point for FMN.

The protein belongs to the pyridoxamine 5'-phosphate oxidase family. As to quaternary structure, homodimer. FMN serves as cofactor.

The enzyme catalyses pyridoxamine 5'-phosphate + O2 + H2O = pyridoxal 5'-phosphate + H2O2 + NH4(+). The catalysed reaction is pyridoxine 5'-phosphate + O2 = pyridoxal 5'-phosphate + H2O2. The protein operates within cofactor metabolism; pyridoxal 5'-phosphate salvage; pyridoxal 5'-phosphate from pyridoxamine 5'-phosphate: step 1/1. It participates in cofactor metabolism; pyridoxal 5'-phosphate salvage; pyridoxal 5'-phosphate from pyridoxine 5'-phosphate: step 1/1. In terms of biological role, catalyzes the oxidation of either pyridoxine 5'-phosphate (PNP) or pyridoxamine 5'-phosphate (PMP) into pyridoxal 5'-phosphate (PLP). This Burkholderia mallei (strain NCTC 10247) protein is Pyridoxine/pyridoxamine 5'-phosphate oxidase.